A 188-amino-acid polypeptide reads, in one-letter code: MSDTTEVPRQSSENDQDNNLERTNSLKSPDVTNNIPSLFKLAAEWQINNPQETFQNHILENDVLKKINEITHLIRESYKDLSSQDGMMSKQQQEKMDWDLFCTVPVNIIEQYTKDMDEIYEKMERLAKQQRLWCESAFQIDVERCGDSILNAETWMKKKERHLEYKNIEMERSANEIKETIQRLTDDR.

2 stretches are compositionally biased toward polar residues: residues Met-1–Glu-13 and Glu-21–Val-31. The tract at residues Met-1–Val-31 is disordered.

Probable transcriptional activator involved in meiotic prophase and synaptonemal complex (SC) assembly. This is Grand meiotic recombination cluster protein 2 (GMC2) from Saccharomyces cerevisiae (strain ATCC 204508 / S288c) (Baker's yeast).